The sequence spans 155 residues: Molybdopterin synthase catalytic subunit (155 aa).

Substrate-binding positions include 109–110, lysine 125, and 132–134; these read HR and KKE.

Belongs to the MoaE family. MOCS2B subfamily. As to quaternary structure, heterotetramer; composed of 2 small (MOCS2A) and 2 large (MOCS2B) subunits.

Its subcellular location is the cytoplasm. The protein localises to the cytosol. The catalysed reaction is 2 [molybdopterin-synthase sulfur-carrier protein]-C-terminal-Gly-aminoethanethioate + cyclic pyranopterin phosphate + H2O = molybdopterin + 2 [molybdopterin-synthase sulfur-carrier protein]-C-terminal Gly-Gly + 2 H(+). It functions in the pathway cofactor biosynthesis; molybdopterin biosynthesis. Functionally, catalytic subunit of the molybdopterin synthase complex, a complex that catalyzes the conversion of precursor Z into molybdopterin. Acts by mediating the incorporation of 2 sulfur atoms from thiocarboxylated MOCS2A into precursor Z to generate a dithiolene group. The protein is Molybdopterin synthase catalytic subunit of Taeniopygia guttata (Zebra finch).